We begin with the raw amino-acid sequence, 347 residues long: Circulating cathodic antigen (347 aa).

Residues 76-109 (ICLAAENKQLEQLKIENKTLRNSLDEHQTALDMI) are a coiled coil. Residues 149–177 (PGPKSVNTPSTNSIDSQSVSQKSNSGKVD) are disordered. A compositionally biased stretch (polar residues) spans 153–174 (SVNTPSTNSIDSQSVSQKSNSG). A coiled-coil region spans residues 206–233 (DAYATELEEELHRLRSENAGLREILMIS). The interval 303-332 (LYNIPNPSDDSSNSGTISGNHSDEDSDEDD) is disordered. A compositionally biased stretch (low complexity) spans 307–316 (PNPSDDSSNS).

This sequence belongs to the SIKE family. O-glycosylated.

Involved in protection of the schistosome gut. In Schistosoma mansoni (Blood fluke), this protein is Circulating cathodic antigen.